The sequence spans 221 residues: UPF0502 protein CPS_0106 (221 aa).

This sequence belongs to the UPF0502 family.

This chain is UPF0502 protein CPS_0106, found in Colwellia psychrerythraea (strain 34H / ATCC BAA-681) (Vibrio psychroerythus).